A 349-amino-acid chain; its full sequence is tRNA N6-adenosine threonylcarbamoyltransferase (349 aa).

Residues His-117, His-121, and Tyr-138 each contribute to the Fe cation site. Substrate contacts are provided by residues 138-142 (YVAGG), Asp-170, Asp-191, and Asn-271. Asp-299 is a Fe cation binding site.

The protein belongs to the KAE1 / TsaD family. Fe(2+) is required as a cofactor.

The protein resides in the cytoplasm. The enzyme catalyses L-threonylcarbamoyladenylate + adenosine(37) in tRNA = N(6)-L-threonylcarbamoyladenosine(37) in tRNA + AMP + H(+). Its function is as follows. Required for the formation of a threonylcarbamoyl group on adenosine at position 37 (t(6)A37) in tRNAs that read codons beginning with adenine. Is probably involved in the transfer of the threonylcarbamoyl moiety of threonylcarbamoyl-AMP (TC-AMP) to the N6 group of A37. The polypeptide is tRNA N6-adenosine threonylcarbamoyltransferase (Aeropyrum pernix (strain ATCC 700893 / DSM 11879 / JCM 9820 / NBRC 100138 / K1)).